We begin with the raw amino-acid sequence, 448 residues long: Tubulin beta chain (448 aa).

Gln-11, Glu-69, Ser-138, Gly-142, Thr-143, Gly-144, Asn-204, and Asn-226 together coordinate GTP. Residue Glu-69 coordinates Mg(2+). Residues 425–448 (YQDASISEGEEEYLEEEEPLEHEE) form a disordered region. The span at 432 to 448 (EGEEEYLEEEEPLEHEE) shows a compositional bias: acidic residues.

It belongs to the tubulin family. Dimer of alpha and beta chains. A typical microtubule is a hollow water-filled tube with an outer diameter of 25 nm and an inner diameter of 15 nM. Alpha-beta heterodimers associate head-to-tail to form protofilaments running lengthwise along the microtubule wall with the beta-tubulin subunit facing the microtubule plus end conferring a structural polarity. Microtubules usually have 13 protofilaments but different protofilament numbers can be found in some organisms and specialized cells. Mg(2+) serves as cofactor.

It localises to the cytoplasm. It is found in the cytoskeleton. In terms of biological role, tubulin is the major constituent of microtubules, a cylinder consisting of laterally associated linear protofilaments composed of alpha- and beta-tubulin heterodimers. Microtubules grow by the addition of GTP-tubulin dimers to the microtubule end, where a stabilizing cap forms. Below the cap, tubulin dimers are in GDP-bound state, owing to GTPase activity of alpha-tubulin. This chain is Tubulin beta chain (benR), found in Aspergillus parasiticus.